The sequence spans 285 residues: Acetyl-coenzyme A carboxylase carboxyl transferase subunit beta (285 aa).

The CoA carboxyltransferase N-terminal domain maps to 22-285 (LWTKCEACGA…HPGVAYAPGV (264 aa)). C26, C29, C45, and C48 together coordinate Zn(2+). The segment at 26-48 (CEACGAQIYKKEFQENLHVCPKC) adopts a C4-type zinc-finger fold.

Belongs to the AccD/PCCB family. As to quaternary structure, acetyl-CoA carboxylase is a heterohexamer composed of biotin carboxyl carrier protein (AccB), biotin carboxylase (AccC) and two subunits each of ACCase subunit alpha (AccA) and ACCase subunit beta (AccD). Zn(2+) is required as a cofactor.

It is found in the cytoplasm. It carries out the reaction N(6)-carboxybiotinyl-L-lysyl-[protein] + acetyl-CoA = N(6)-biotinyl-L-lysyl-[protein] + malonyl-CoA. The protein operates within lipid metabolism; malonyl-CoA biosynthesis; malonyl-CoA from acetyl-CoA: step 1/1. Its function is as follows. Component of the acetyl coenzyme A carboxylase (ACC) complex. Biotin carboxylase (BC) catalyzes the carboxylation of biotin on its carrier protein (BCCP) and then the CO(2) group is transferred by the transcarboxylase to acetyl-CoA to form malonyl-CoA. The protein is Acetyl-coenzyme A carboxylase carboxyl transferase subunit beta of Thermus thermophilus (strain ATCC BAA-163 / DSM 7039 / HB27).